A 439-amino-acid chain; its full sequence is Homogentisate 1,2-dioxygenase (439 aa).

Residues H335, E341, and H371 each contribute to the Fe cation site.

This sequence belongs to the homogentisate dioxygenase family. Fe cation is required as a cofactor.

The catalysed reaction is homogentisate + O2 = 4-maleylacetoacetate + H(+). Its pathway is amino-acid degradation; L-phenylalanine degradation; acetoacetate and fumarate from L-phenylalanine: step 4/6. This chain is Homogentisate 1,2-dioxygenase, found in Drosophila melanogaster (Fruit fly).